The following is a 319-amino-acid chain: Ribonuclease Z (319 aa).

Residues H62, H64, D66, H67, H145, D215, and H273 each coordinate Zn(2+). The Proton acceptor role is filled by D66.

Belongs to the RNase Z family. In terms of assembly, homodimer. It depends on Zn(2+) as a cofactor.

It carries out the reaction Endonucleolytic cleavage of RNA, removing extra 3' nucleotides from tRNA precursor, generating 3' termini of tRNAs. A 3'-hydroxy group is left at the tRNA terminus and a 5'-phosphoryl group is left at the trailer molecule.. Zinc phosphodiesterase, which displays some tRNA 3'-processing endonuclease activity. Probably involved in tRNA maturation, by removing a 3'-trailer from precursor tRNA. This chain is Ribonuclease Z, found in Borrelia garinii subsp. bavariensis (strain ATCC BAA-2496 / DSM 23469 / PBi) (Borreliella bavariensis).